Here is a 364-residue protein sequence, read N- to C-terminus: Fructose-1,6-bisphosphatase class 1 2 (364 aa).

Residues glutamate 99, aspartate 121, leucine 123, and aspartate 124 each contribute to the Mg(2+) site. Substrate is bound by residues 124-127 (DGSS) and asparagine 220. Glutamate 292 contributes to the Mg(2+) binding site.

Belongs to the FBPase class 1 family. Homotetramer. Requires Mg(2+) as cofactor.

It is found in the cytoplasm. It catalyses the reaction beta-D-fructose 1,6-bisphosphate + H2O = beta-D-fructose 6-phosphate + phosphate. The protein operates within carbohydrate biosynthesis; gluconeogenesis. The sequence is that of Fructose-1,6-bisphosphatase class 1 2 from Polaromonas naphthalenivorans (strain CJ2).